A 205-amino-acid chain; its full sequence is V-type ATP synthase subunit E (205 aa).

This sequence belongs to the V-ATPase E subunit family.

Produces ATP from ADP in the presence of a proton gradient across the membrane. The sequence is that of V-type ATP synthase subunit E from Treponema denticola (strain ATCC 35405 / DSM 14222 / CIP 103919 / JCM 8153 / KCTC 15104).